The following is a 406-amino-acid chain: Lissencephaly-1 homolog (406 aa).

Positions 7 to 39 constitute a LisH domain; it reads QREELNKAIADYLRSNGYESALEAFQKEAEMPG. Residues 54-81 adopt a coiled-coil conformation; it reads TSVIRLQKKVMDLEAKLAEAEKEFQSGG. Positions 74–89 are enriched in basic and acidic residues; it reads EKEFQSGGPNKKERSP. Residues 74–99 are disordered; sequence EKEFQSGGPNKKERSPSEWIPRPPAR. 7 WD repeats span residues 104-145, 146-185, 188-227, 230-269, 272-329, 332-371, and 374-406; these read GHRS…RTLK, GHTDAVQDVSFDQQGKLLASCSADMTIKLWDFQTFENIKT, GHDHNVSSVHFMPNGDFLISASRDKTIKMWELATGYCVKT, GHREWVRTVRVNQDGSLLASCSNDQTVRVWVVANKECKAE, EHEH…CIMT, GHDNWVRGVVWHPGGKYIISASDDKTIRVWDYKNKRCQKT, and AHQHFCTSIDFHRSAPYVITGSVDQTVKVWECR.

Belongs to the WD repeat LIS1/nudF family.

Its subcellular location is the cytoplasm. The protein localises to the cytoskeleton. The protein resides in the microtubule organizing center. It is found in the centrosome. In terms of biological role, positively regulates the activity of the minus-end directed microtubule motor protein dynein. May enhance dynein-mediated microtubule sliding by targeting dynein to the microtubule plus end. Required for several dynein- and microtubule-dependent processes. The chain is Lissencephaly-1 homolog from Branchiostoma floridae (Florida lancelet).